The primary structure comprises 428 residues: Glutamate-1-semialdehyde 2,1-aminomutase (428 aa).

At Lys265 the chain carries N6-(pyridoxal phosphate)lysine.

It belongs to the class-III pyridoxal-phosphate-dependent aminotransferase family. HemL subfamily. As to quaternary structure, homodimer. It depends on pyridoxal 5'-phosphate as a cofactor.

It localises to the cytoplasm. It catalyses the reaction (S)-4-amino-5-oxopentanoate = 5-aminolevulinate. It participates in porphyrin-containing compound metabolism; protoporphyrin-IX biosynthesis; 5-aminolevulinate from L-glutamyl-tRNA(Glu): step 2/2. The sequence is that of Glutamate-1-semialdehyde 2,1-aminomutase from Shewanella frigidimarina (strain NCIMB 400).